A 1004-amino-acid polypeptide reads, in one-letter code: MAKQEQAPDRANDVFALTSFLYGGNADYIEELYAKYEDDPNSVDPQWRDFFAKLGDNADDVKKNAEGPSWTRKNWPIAANGELVSALDGNWAEVEKHVTDKLKGKAAKGEAKGAAGTPLTAEEITQAARDSVRAIMMIRAYRMRGHLHANLDPLGLAEKPNDYNELEPENYGFTPADYNRKIFIDNVLGLEYATVPEMLDILKRTYCGAIGVEFMHISDPAEKAWIQERIEGPDKKVAFTPEGKKAILSKLIEAEGFEQFIDVKYKGTKRFGLDGGESLIPALEQIVKRGGQMGLKEVVLGMAHRGRLNVLSQVMGKPHRAIFHEFKGGSYTPDDVEGSGDVKYHLGASSDREFDGNKVHLSLTANPSHLEIVNPVVMGKARAKQDLLVGRTRDDMVPLSERAKVLPLLLHGDAAFAGQGVVAECLGLSGLKGHRVAGTLHFIINNQIGFTTNPAFSRSSPYPSDVAKMIEAPIFHVNGDDPEAVVFAAKVATEFRMTFHKPVVIDMFCYRRFGHNEGDEPSFTQPLMYKAIRAHKTTVQLYGEKLIAEGLVTQDDIDRMKADWRQKLEGEFEAGQSYKPNKADWLDGAWAGLRTADNADEQRRGKTAVPVKTLKEIGKKLVEVPKDFHVHRTIQRFLDNRAKMMETGEGIDWATAESLAFGSLAVEAHPIRLSGQDVERGTFSQRHTVLYDQENQNRYIPLNNLQKGQAIYEAINSMLSEEAVLGYEYGYSLSDPRALVLWEAQFGDFANGAQVVFDQFISSGERKWLRMSGLVCLLPHGFEGQGPEHSSARLERYLQLCAEDNMQVANVTTPANYFHILRRQMKRDFRKPLIMMTPKSLLRHKRAISTLAELSGESSFHRLLWDDAQYNKDEGIKLQKDAKIRRVVLCSGKVYYDLYEEREKRGIDDVYLLRVEQLYPFPAKALINELSRFRHAEMVWCQEEPKNMGAWSFIDPYLEWVLAHIDAKHQRVRYAGRPAAASPATGLMSKHLAQLAAFLEDALG.

It belongs to the alpha-ketoglutarate dehydrogenase family. As to quaternary structure, homodimer. Part of the 2-oxoglutarate dehydrogenase (OGDH) complex composed of E1 (2-oxoglutarate dehydrogenase), E2 (dihydrolipoamide succinyltransferase) and E3 (dihydrolipoamide dehydrogenase); the complex contains multiple copies of the three enzymatic components (E1, E2 and E3). Thiamine diphosphate is required as a cofactor.

The enzyme catalyses N(6)-[(R)-lipoyl]-L-lysyl-[protein] + 2-oxoglutarate + H(+) = N(6)-[(R)-S(8)-succinyldihydrolipoyl]-L-lysyl-[protein] + CO2. E1 component of the 2-oxoglutarate dehydrogenase (OGDH) complex which catalyzes the decarboxylation of 2-oxoglutarate, the first step in the conversion of 2-oxoglutarate to succinyl-CoA and CO(2). This Brucella melitensis biotype 2 (strain ATCC 23457) protein is 2-oxoglutarate dehydrogenase E1 component.